Here is a 25-residue protein sequence, read N- to C-terminus: Cysteine protease inhibitor 2 (25 aa).

It belongs to the protease inhibitor I3 (leguminous Kunitz-type inhibitor) family. Cortex of tuber.

Inhibitor of subtilisin. Inhibits moderately trypsin and chymotrypsin (serine proteases). May protect the plant by inhibiting proteases of invading organisms. The chain is Cysteine protease inhibitor 2 from Solanum tuberosum (Potato).